Here is a 1397-residue protein sequence, read N- to C-terminus: ABC transporter G family member 41 (1397 aa).

The region spanning 138 to 411 is the ABC transporter 1 domain; sequence SLSKFVCSKK…FEGCGFKCPE (274 aa). Residue 171-178 participates in ATP binding; the sequence is GPPGCGKT. Residues 489-701 enclose the ABC transmembrane type-2 1 domain; sequence EMLKACSRRE…AEIGLTANEF (213 aa). Transmembrane regions (helical) follow at residues 507–527, 549–570, 594–614, 625–645, 651–671, and 735–755; these read FIYL…MTVF, ALFR…RLGV, IPLS…VIGY, FIIL…IASI, ACSI…GFVI, and TAFG…TLAL. Positions 805-1050 constitute an ABC transporter 2 domain; sequence VTFQNVQYYI…VIKYFESIPG (246 aa). 842 to 849 is a binding site for ATP; that stretch reads GVSGAGKT. In terms of domain architecture, ABC transmembrane type-2 2 spans 1122–1336; it reads GQLKACLWKQ…VLEGLLSSQY (215 aa). The next 7 helical transmembrane spans lie at 1141 to 1161, 1173 to 1193, 1229 to 1249, 1260 to 1280, 1286 to 1306, 1314 to 1334, and 1369 to 1389; these read HNLT…LLFW, LFSI…NNCA, VPYS…MIGY, LYSI…MVAL, MALT…GFVM, WWIW…LLSS, and VVAF…AFFM.

Belongs to the ABC transporter superfamily. ABCG family. PDR (TC 3.A.1.205) subfamily. In terms of tissue distribution, confined to roots.

The protein resides in the membrane. Its function is as follows. May be a general defense protein. The sequence is that of ABC transporter G family member 41 (ABCG41) from Arabidopsis thaliana (Mouse-ear cress).